Here is a 79-residue protein sequence, read N- to C-terminus: Small ribosomal subunit protein bS18 (79 aa).

Belongs to the bacterial ribosomal protein bS18 family. Part of the 30S ribosomal subunit. Forms a tight heterodimer with protein bS6.

Binds as a heterodimer with protein bS6 to the central domain of the 16S rRNA, where it helps stabilize the platform of the 30S subunit. The chain is Small ribosomal subunit protein bS18 from Afipia carboxidovorans (strain ATCC 49405 / DSM 1227 / KCTC 32145 / OM5) (Oligotropha carboxidovorans).